The following is a 221-amino-acid chain: PKHD-type hydroxylase PMN2A_0775 (221 aa).

The 95-residue stretch at 80 to 174 folds into the Fe2OG dioxygenase domain; the sequence is LIHGVMFTQS…RHVCVGWIQS (95 aa). The Fe cation site is built by H98, D100, and H155. R165 is a 2-oxoglutarate binding site.

Fe(2+) is required as a cofactor. L-ascorbate serves as cofactor.

The chain is PKHD-type hydroxylase PMN2A_0775 from Prochlorococcus marinus (strain NATL2A).